Reading from the N-terminus, the 198-residue chain is Peptidyl-tRNA hydrolase (198 aa).

Tyrosine 16 contacts tRNA. Residue histidine 21 is the Proton acceptor of the active site. Positions 67, 69, and 115 each coordinate tRNA.

It belongs to the PTH family. Monomer.

The protein resides in the cytoplasm. The catalysed reaction is an N-acyl-L-alpha-aminoacyl-tRNA + H2O = an N-acyl-L-amino acid + a tRNA + H(+). In terms of biological role, hydrolyzes ribosome-free peptidyl-tRNAs (with 1 or more amino acids incorporated), which drop off the ribosome during protein synthesis, or as a result of ribosome stalling. Its function is as follows. Catalyzes the release of premature peptidyl moieties from peptidyl-tRNA molecules trapped in stalled 50S ribosomal subunits, and thus maintains levels of free tRNAs and 50S ribosomes. The sequence is that of Peptidyl-tRNA hydrolase from Gloeobacter violaceus (strain ATCC 29082 / PCC 7421).